Here is a 589-residue protein sequence, read N- to C-terminus: Inactive poly [ADP-ribose] polymerase RCD1 (589 aa).

In terms of domain architecture, WWE spans 64–153 (KLSAYENRSG…ETGAKTPLAW (90 aa)). Positions 248–469 (EAAVSKWDET…LIAKRDNSGV (222 aa)) constitute a PARP catalytic domain. Disordered regions lie at residues 464 to 504 (RDNS…TRPK) and 569 to 589 (QPKS…AGGL). A compositionally biased stretch (polar residues) spans 481-503 (LESNQGARGSGSANSVGSSTTRP). Residues 501 to 572 (TRPKSPWMPF…ITTLQNQPKS (72 aa)) enclose the RST domain. Residues 571-589 (KSKEIPGSIRDHEEGAGGL) are compositionally biased toward basic and acidic residues.

As to quaternary structure, interacts with the transcription factors NAC013/NTL1 and NAC046. Interacts with dehydration-responsive DREB2 proteins and a number of transcription factors belonging to several protein families. Interacts with turnip crinkle virus (TCV) movement protein P8. Expressed in young developing tissues, such as young leaves and flowers and root tips. In mature plants, expressed in vasculature of leaves and roots, and guard cells.

The protein localises to the nucleus matrix. Its function is as follows. Inactive ADP-ribosyltransferase that functions with SRO1 to regulate oxidative stress, hormonal and developmental responses. Required for embryogenesis, vegetative and reproductive development, and abiotic stress responses. May regulate several stress-responsive genes. Seems to play a larger developmental role than SRO1. Does not bind NAD in vitro. This chain is Inactive poly [ADP-ribose] polymerase RCD1 (RCD1), found in Arabidopsis thaliana (Mouse-ear cress).